Reading from the N-terminus, the 225-residue chain is Riboflavin kinase (225 aa).

The tract at residues 1–89 is unknown; it reads MPDIEYLKKL…SRIFSSEPDT (89 aa). A riboflavin kinase region spans residues 90–225; it reads LELEGNVLKG…LKKQGMEGQK (136 aa). 99–104 is a binding site for CDP; the sequence is GLGEGQ. Residues Thr-128 and Asn-130 each contribute to the Mg(2+) site. FMN-binding residues include Thr-185 and Glu-193. 198-201 contacts CDP; sequence VKLR.

This sequence belongs to the archaeal riboflavin kinase family. It depends on Mg(2+) as a cofactor.

The catalysed reaction is riboflavin + CTP = CDP + FMN + H(+). It functions in the pathway cofactor biosynthesis; FMN biosynthesis; FMN from riboflavin (CTP route): step 1/1. Catalyzes the CTP-dependent phosphorylation of riboflavin (vitamin B2) to form flavin mononucleotide (FMN). The protein is Riboflavin kinase (ribK) of Methanosarcina mazei (strain ATCC BAA-159 / DSM 3647 / Goe1 / Go1 / JCM 11833 / OCM 88) (Methanosarcina frisia).